A 181-amino-acid polypeptide reads, in one-letter code: MLKKSKVKEIQEKVYEALKKANIAITPEEKENIEVADFGLGDLENTGLQLLVYVNTDRYCAKELVLFPGQTCPEHRHPPVNGKPGKQETFRCRYGKVYLYVEGEKTENPHCRPPKGSEQYYTVWHEIELNPGEQYTIEPNTLHWFQAGEEGAIVSEFSSHSDDESDIFTDPRIKRIPEIED.

Residues His-75, His-77, Glu-88, and His-143 each contribute to the Mn(2+) site.

Belongs to the D-lyxose ketol-isomerase family. As to quaternary structure, homodimer. Mn(2+) is required as a cofactor.

It carries out the reaction D-lyxose = D-xylulose. The catalysed reaction is D-mannose = D-fructose. Sugar isomerase that catalyzes the reversible isomerization of D-lyxose to D-xylulose, and D-mannose to D-fructose. Shows optimum activity using D-lyxose as substrate, but can also effectively catalyze the isomerization between D-fructose and D-mannose. The polypeptide is D-lyxose/D-mannose isomerase (Thermosediminibacter oceani (strain ATCC BAA-1034 / DSM 16646 / JW/IW-1228P)).